The chain runs to 242 residues: Pyridoxine 5'-phosphate synthase (242 aa).

Position 7 (asparagine 7) interacts with 3-amino-2-oxopropyl phosphate. Position 9 to 10 (9 to 10 (DH)) interacts with 1-deoxy-D-xylulose 5-phosphate. Arginine 18 contacts 3-amino-2-oxopropyl phosphate. Residue histidine 43 is the Proton acceptor of the active site. 2 residues coordinate 1-deoxy-D-xylulose 5-phosphate: arginine 45 and histidine 50. Glutamate 70 (proton acceptor) is an active-site residue. Threonine 100 is a binding site for 1-deoxy-D-xylulose 5-phosphate. Catalysis depends on histidine 191, which acts as the Proton donor. Residues glycine 192 and 213 to 214 (GH) each bind 3-amino-2-oxopropyl phosphate.

It belongs to the PNP synthase family. In terms of assembly, homooctamer; tetramer of dimers.

The protein localises to the cytoplasm. The enzyme catalyses 3-amino-2-oxopropyl phosphate + 1-deoxy-D-xylulose 5-phosphate = pyridoxine 5'-phosphate + phosphate + 2 H2O + H(+). It participates in cofactor biosynthesis; pyridoxine 5'-phosphate biosynthesis; pyridoxine 5'-phosphate from D-erythrose 4-phosphate: step 5/5. Functionally, catalyzes the complicated ring closure reaction between the two acyclic compounds 1-deoxy-D-xylulose-5-phosphate (DXP) and 3-amino-2-oxopropyl phosphate (1-amino-acetone-3-phosphate or AAP) to form pyridoxine 5'-phosphate (PNP) and inorganic phosphate. The sequence is that of Pyridoxine 5'-phosphate synthase from Chromobacterium violaceum (strain ATCC 12472 / DSM 30191 / JCM 1249 / CCUG 213 / NBRC 12614 / NCIMB 9131 / NCTC 9757 / MK).